Consider the following 1230-residue polypeptide: ATP-dependent helicase/nuclease subunit A (1230 aa).

In terms of domain architecture, UvrD-like helicase ATP-binding spans S9 to R480. Residue A30 to T37 participates in ATP binding. A UvrD-like helicase C-terminal domain is found at Q507–G796.

This sequence belongs to the helicase family. AddA subfamily. As to quaternary structure, heterodimer of AddA and AddB/RexB. Mg(2+) serves as cofactor.

It carries out the reaction Couples ATP hydrolysis with the unwinding of duplex DNA by translocating in the 3'-5' direction.. The enzyme catalyses ATP + H2O = ADP + phosphate + H(+). In terms of biological role, the heterodimer acts as both an ATP-dependent DNA helicase and an ATP-dependent, dual-direction single-stranded exonuclease. Recognizes the chi site generating a DNA molecule suitable for the initiation of homologous recombination. The AddA nuclease domain is required for chi fragment generation; this subunit has the helicase and 3' -&gt; 5' nuclease activities. This Bacillus licheniformis (strain ATCC 14580 / DSM 13 / JCM 2505 / CCUG 7422 / NBRC 12200 / NCIMB 9375 / NCTC 10341 / NRRL NRS-1264 / Gibson 46) protein is ATP-dependent helicase/nuclease subunit A.